A 333-amino-acid polypeptide reads, in one-letter code: Nucleoid-associated protein (333 aa).

The protein belongs to the YejK family.

It is found in the cytoplasm. The protein localises to the nucleoid. The polypeptide is Nucleoid-associated protein (Metapseudomonas resinovorans (Pseudomonas resinovorans)).